The primary structure comprises 279 residues: Expansin-A22 (279 aa).

Positions methionine 1–glycine 27 are cleaved as a signal peptide. In terms of domain architecture, Expansin-like EG45 spans glutamine 76–glycine 186. The 80-residue stretch at tyrosine 196–glycine 275 folds into the Expansin-like CBD domain.

This sequence belongs to the expansin family. Expansin A subfamily.

It localises to the secreted. Its subcellular location is the cell wall. The protein resides in the membrane. Causes loosening and extension of plant cell walls by disrupting non-covalent bonding between cellulose microfibrils and matrix glucans. No enzymatic activity has been found. This Arabidopsis thaliana (Mouse-ear cress) protein is Expansin-A22 (EXPA22).